We begin with the raw amino-acid sequence, 109 residues long: uncharacterized protein (109 aa).

A helical transmembrane segment spans residues 26-48; sequence VTSIMTVSDINYLLLYLIILLTL.

It is found in the membrane. This is an uncharacterized protein from Saccharomyces cerevisiae (strain ATCC 204508 / S288c) (Baker's yeast).